The sequence spans 205 residues: ITG-like peptide (205 aa).

The N-terminal stretch at 1-15 is a signal peptide; that stretch reads MRVYAAITLVLVANT. Propeptides lie at residues 16–188 and 202–205; these read AYIG…TSGE and MPFA.

Expressed throughout the nervous system (at protein level).

The protein localises to the secreted. In Camponotus floridanus (Florida carpenter ant), this protein is ITG-like peptide.